A 151-amino-acid polypeptide reads, in one-letter code: Ubiquitin-conjugating enzyme E2 2 (151 aa).

A disordered region spans residues 1 to 26 (MSTSARRRLMRDFKRMQTDPPAGVSA). One can recognise a UBC core domain in the interval 4-150 (SARRRLMRDF…VRETVEKSWE (147 aa)). The active-site Glycyl thioester intermediate is Cys-88.

It belongs to the ubiquitin-conjugating enzyme family.

It is found in the cytoplasm. The protein localises to the nucleus. It catalyses the reaction S-ubiquitinyl-[E1 ubiquitin-activating enzyme]-L-cysteine + [E2 ubiquitin-conjugating enzyme]-L-cysteine = [E1 ubiquitin-activating enzyme]-L-cysteine + S-ubiquitinyl-[E2 ubiquitin-conjugating enzyme]-L-cysteine.. It participates in protein modification; protein ubiquitination. Its function is as follows. Catalyzes the covalent attachment of ubiquitin to other proteins. Plays a role in transcription regulation by catalyzing the monoubiquitination of histone H2B to form H2BK123ub1. H2BK123ub1 gives a specific tag for epigenetic transcriptional activation and is also a prerequisite for H3K4me and H3K79me formation. Also involved in postreplication repair of UV-damaged DNA, in N-end rule-dependent protein degradation and in sporulation. The chain is Ubiquitin-conjugating enzyme E2 2 (uvsJ) from Emericella nidulans (strain FGSC A4 / ATCC 38163 / CBS 112.46 / NRRL 194 / M139) (Aspergillus nidulans).